Here is a 943-residue protein sequence, read N- to C-terminus: UvrABC system protein A (943 aa).

32–39 serves as a coordination point for ATP; that stretch reads GLSGSGKS. The C4-type zinc finger occupies 251 to 278; it reads CPVCGFTVPELEPRLFSFNAPFGSCPTC. ABC transporter domains are found at residues 308 to 589 and 609 to 937; these read WNPI…KKSI and GSGR…QYLK. ATP is bound at residue 641–648; the sequence is GVSGSGKS. The segment at 740–766 adopts a C4-type zinc-finger fold; the sequence is CEACSGDGIIKIEMHFLPDVYVPCEVC.

The protein belongs to the ABC transporter superfamily. UvrA family. As to quaternary structure, forms a heterotetramer with UvrB during the search for lesions.

It localises to the cytoplasm. The UvrABC repair system catalyzes the recognition and processing of DNA lesions. UvrA is an ATPase and a DNA-binding protein. A damage recognition complex composed of 2 UvrA and 2 UvrB subunits scans DNA for abnormalities. When the presence of a lesion has been verified by UvrB, the UvrA molecules dissociate. The chain is UvrABC system protein A from Streptococcus mutans serotype c (strain ATCC 700610 / UA159).